Consider the following 70-residue polypeptide: Large ribosomal subunit protein bL31 (70 aa).

Positions 17, 19, 37, and 40 each coordinate Zn(2+).

Belongs to the bacterial ribosomal protein bL31 family. Type A subfamily. Part of the 50S ribosomal subunit. It depends on Zn(2+) as a cofactor.

Functionally, binds the 23S rRNA. The polypeptide is Large ribosomal subunit protein bL31 (Clostridium acetobutylicum (strain ATCC 824 / DSM 792 / JCM 1419 / IAM 19013 / LMG 5710 / NBRC 13948 / NRRL B-527 / VKM B-1787 / 2291 / W)).